Consider the following 185-residue polypeptide: Sarcoplasmic calcium-binding proteins II, V, VI, and VII (185 aa).

EF-hand domains are found at residues 5-41, 57-92, 102-137, and 138-173; these read FQKQ…YKEV, SLED…TIAT, WCQN…FQLQ, and CADV…TSPA. The Ca(2+) site is built by Asp19, Asn21, Asp23, Ser25, Asp30, Asp70, Asn72, Asp74, Glu81, Asp115, Ser117, Asp119, and Glu126.

Its function is as follows. Like parvalbumins, SCPs seem to be more abundant in fast contracting muscles, but no functional relationship can be established from this distribution. The sequence is that of Sarcoplasmic calcium-binding proteins II, V, VI, and VII from Branchiostoma lanceolatum (Common lancelet).